The primary structure comprises 52 residues: Large ribosomal subunit protein eL40 (52 aa).

It belongs to the eukaryotic ribosomal protein eL40 family.

The polypeptide is Large ribosomal subunit protein eL40 (Thermococcus onnurineus (strain NA1)).